We begin with the raw amino-acid sequence, 377 residues long: Transcription initiation factor IIA subunit 1 (377 aa).

A2 carries the post-translational modification N-acetylalanine. Low complexity-rich tracts occupy residues 69-79, 89-105, and 248-280; these read QVQQQHQPQQQ, QAQP…TQQV, and QAQI…TGDT. 2 disordered regions span residues 69–107 and 248–330; these read QVQQ…QVLI and QAQI…QELF. Phosphoserine; by TAF1 is present on residues S281 and S282. A compositionally biased stretch (acidic residues) spans 281–330; sequence SSEEDEDEEEDYDDDEEEDKEKDGAEDGQVEEEPLNSEDDVSDEEGQELF. 2 positions are modified to phosphoserine: S317 and S322. H344 and R345 together coordinate DNA.

The protein belongs to the TFIIA subunit 1 family. As to quaternary structure, TFIIA is a heterodimer of the large unprocessed subunit 1 and a small subunit gamma. It was originally believed to be a heterotrimer of an alpha (p35), a beta (p19) and a gamma subunit (p12). TFIIA forms a complex with TBP. Part of TBP-based Pol II pre-initiation complex (PIC), in which Pol II core assembles with general transcription factors and other specific initiation factors including GTF2E1, GTF2E2, GTF2F1, GTF2F2, TCEA1, ERCC2, ERCC3, GTF2H2, GTF2H3, GTF2H4, GTF2H5, GTF2A1, GTF2A2, GTF2B and TBP; this large multi-subunit PIC complex mediates DNA unwinding and targets Pol II core to the transcription start site where the first phosphodiester bond forms. The alpha and beta subunits are postranslationally produced from the precursor formby TASP1. The cleavage promotes proteasomal degradation.

The protein resides in the nucleus. In terms of biological role, TFIIA is a component of the transcription machinery of RNA polymerase II and plays an important role in transcriptional activation. TFIIA in a complex with TBP mediates transcriptional activity. The chain is Transcription initiation factor IIA subunit 1 (Gtf2a1) from Rattus norvegicus (Rat).